A 51-amino-acid polypeptide reads, in one-letter code: ASTQHLCGSHLVEALYLVCGSNGFFFNPKDGIVEQCCHKPCSIFDLQNYCN.

Disulfide bonds link Cys7–Cys37, Cys19–Cys50, and Cys36–Cys41.

Belongs to the insulin family. Heterodimer of a B chain and an A chain linked by two disulfide bonds.

The protein resides in the secreted. Its function is as follows. Insulin decreases blood glucose concentration. It increases cell permeability to monosaccharides, amino acids and fatty acids. It accelerates glycolysis, the pentose phosphate cycle, and glycogen synthesis in liver. The polypeptide is Insulin (ins) (Anguilla rostrata (American eel)).